The sequence spans 574 residues: Interleukin-1 receptor-like 2 (574 aa).

Positions 1 to 21 (MGVTSLLFCGVFFLLLLFVAA) are cleaved as a signal peptide. Residues 22 to 338 (DTCEDIFMHN…ILIYPVPDFR (317 aa)) are Extracellular-facing. 3 Ig-like C2-type domains span residues 25–113 (EDIF…VNLT), 132–215 (PDVY…IRNY), and 225–321 (YGRR…TCHA). Residues N43, N55, and N111 are each glycosylated (N-linked (GlcNAc...) asparagine). C44 and C97 are joined by a disulfide. Residues C149 and C199 are joined by a disulfide bond. 6 N-linked (GlcNAc...) asparagine glycosylation sites follow: N231, N237, N253, N269, N290, and N302. The cysteines at positions 252 and 319 are disulfide-linked. The helical transmembrane segment at 339 to 359 (AYLLGGLMAFLLLVVSVLFIY) threads the bilayer. Over 360–574 (NSFKIDIMLW…CNAATGLITP (215 aa)) the chain is Cytoplasmic. The TIR domain maps to 384 to 539 (KLYDAYVLYP…KFWKKVRYHM (156 aa)). E470 is an active-site residue.

Belongs to the interleukin-1 receptor family. Interacts with IL1RAP; the association is enhanced by IL36B indicative for an functional signaling complex and inhibited by IL36RN. As to expression, expressed in bone marrow-derived dendritic cells, splenic CD4(+) T-cells, bone marrow-derived macrophages and bone marrow-derived neutrophils.

Its subcellular location is the membrane. The enzyme catalyses NAD(+) + H2O = ADP-D-ribose + nicotinamide + H(+). Its function is as follows. Receptor for interleukin-36 (IL36A, IL36B and IL36G). After binding to interleukin-36 associates with the coreceptor IL1RAP to form the interleukin-36 receptor complex which mediates interleukin-36-dependent activation of NF-kappa-B, MAPK and other pathways. The IL-36 signaling system is thought to be present in epithelial barriers and to take part in local inflammatory response; it is similar to the IL-1 system. Seems to be involved in skin inflammatory response by induction of the IL-23/IL-17/IL-22 pathway. The sequence is that of Interleukin-1 receptor-like 2 (Il1rl2) from Mus musculus (Mouse).